The chain runs to 169 residues: Sorting nexin-24 (169 aa).

At methionine 1 the chain carries N-acetylmethionine. The region spanning 1–125 is the PX domain; sequence MEVYIPSFRY…SFDETESEES (125 aa). Residues arginine 38, serine 40, lysine 61, and arginine 74 each coordinate a 1,2-diacyl-sn-glycero-3-phospho-(1D-myo-inositol-3-phosphate). Phosphoserine occurs at positions 113 and 116.

This sequence belongs to the sorting nexin family.

The protein resides in the cytoplasmic vesicle membrane. Functionally, may be involved in several stages of intracellular trafficking. The polypeptide is Sorting nexin-24 (SNX24) (Bos taurus (Bovine)).